The chain runs to 424 residues: Alkaline nuclease (424 aa).

The protein belongs to the baculo-herpesviridae alkaline nuclease family. Interacts with LEF-3.

It is found in the host nucleus. Functionally, may play a role in maturation and encapsidation of viral replicated genome, by promoting DNA homologous recombination. Exhibits endonuclease and 5'-&gt;3' exonuclease activities. The endonuclease activity displays a specificity for ssDNA in vitro. In Orgyia pseudotsugata (Douglas-fir tussock moth), this protein is Alkaline nuclease (ALK-EXO).